The following is a 629-amino-acid chain: MFYPEQFDVIIIGGGHAGTEAAMAAARMGRQTLLLTHNIDTLGQMSCNPAIGGIGKGHLVKEIDALGGLMAKATDQAGIQFRTLNASKGPAVRATRAQADRVLYRQAVRMALENQPNLMIFQQPVEDLIVENDTVTGAVTRMGLKFRAKAVVLTVGTFLDGKIHIGLENYSGGRAGGPPAISLAQRLRELPLRVNRLKTGTPPRIDARTIDFSQLTQQLGDNPTPVFSFLGNVKQHPQQIPCYITHTNEKTHDVIRNNLDRSPMYTGIIEGIGPRYCPSIEDKVMRFADRDAHQIFLEPEGLTSNEIYPNGISTSLPFDVQMQIVHSMKGMENARIIRPGYAIEYDFFDPRDLKQTLESKFIHGLFFAGQINGTTGYEEAAAQGLLAGLNAARYASEEESWFPRRDQAYIGVLVDDLCTLGTKEPYRMFTSRAEYRLMLREDNADLRLTEKGRELGLVDDSRWEHYCRKLEMVEQERQRLRNIWIHPNSNNLNDINNILKMPLSKEANGEDLLRRPEMNYKLLTSLPLFSPSLEEPQAADQVEIQVKYEGYIARQQEEIEKQLRNENTSLPVDLDYRQISGLSNEVVAKLNDHKPSSIGQASRISGVTPAAISILLVWLKKQGLLRRSS.

13–18 (GGGHAG) lines the FAD pocket. Position 273 to 287 (273 to 287 (GPRYCPSIEDKVMRF)) interacts with NAD(+).

This sequence belongs to the MnmG family. Homodimer. Heterotetramer of two MnmE and two MnmG subunits. The cofactor is FAD.

It is found in the cytoplasm. Functionally, NAD-binding protein involved in the addition of a carboxymethylaminomethyl (cmnm) group at the wobble position (U34) of certain tRNAs, forming tRNA-cmnm(5)s(2)U34. This is tRNA uridine 5-carboxymethylaminomethyl modification enzyme MnmG from Photorhabdus laumondii subsp. laumondii (strain DSM 15139 / CIP 105565 / TT01) (Photorhabdus luminescens subsp. laumondii).